Reading from the N-terminus, the 131-residue chain is 14.7 kDa heat shock protein (131 aa).

The span at 1–11 shows a compositional bias: polar residues; that stretch reads MSRNMEVNAGS. A disordered region spans residues 1-20; sequence MSRNMEVNAGSSGEIPSPIR. Residues 22-131 form the sHSP domain; the sequence is RFQKSGSQAV…INVKERILHY (110 aa).

It belongs to the small heat shock protein (HSP20) family. May form oligomeric structures.

It localises to the cytoplasm. In Arabidopsis thaliana (Mouse-ear cress), this protein is 14.7 kDa heat shock protein (HSP14.7).